We begin with the raw amino-acid sequence, 243 residues long: Secreted RxLR effector protein 28 (243 aa).

Residues 1–26 form the signal peptide; that stretch reads MHVSRIIAHIALATAITATTVSPTDA. The RxLR signature appears at 49–52; that stretch reads RGLR. The tract at residues 187–243 is disordered; that stretch reads NVDEDKGQNFGHSVSGPPTTTLTGPHTKSGIPPFENLVAPAKGSMPNTRRNGYQFFE. Positions 199 to 216 are enriched in low complexity; the sequence is SVSGPPTTTLTGPHTKSG.

Belongs to the RxLR effector family.

It localises to the secreted. It is found in the host cytoplasm. The protein resides in the host nucleus. Its function is as follows. Effector that significantly enhances susceptibilities of grapevine and tobacco to pathogens. Acts as a broad suppressor of cell death to interrupt plant immunity. Completely inhibits cell death induced by cell death-inducing proteins, including the PAMP elicitor INF1 from P.infestans. Reduces the transcriptional levels of the defense-related genes and impairs the H(2)O(2) accumulation in N.benthamiana. The polypeptide is Secreted RxLR effector protein 28 (Plasmopara viticola (Downy mildew of grapevine)).